Consider the following 93-residue polypeptide: Leukocyte-specific transcript 1 protein (93 aa).

A helical membrane pass occupies residues 14–32 (AGSCCWLWSFCPPACIGCI). Ser54 is modified (phosphoserine). Positions 57–82 (RLPVSSSEGPDLRDRDKRGTKEDPRA) are disordered. Positions 66–82 (PDLRDRDKRGTKEDPRA) are enriched in basic and acidic residues.

Belongs to the LST1 family.

The protein resides in the membrane. Its subcellular location is the golgi apparatus membrane. It is found in the endomembrane system. Possible role in modulating immune responses. Has an inhibitory effect on lymphocyte proliferation. Induces morphological changes including production of filopodia and microspikes when overexpressed in a variety of cell types and may be involved in dendritic cell maturation. This is Leukocyte-specific transcript 1 protein (LST1) from Macaca mulatta (Rhesus macaque).